The primary structure comprises 314 residues: Methylglutaconyl-CoA hydratase, mitochondrial (314 aa).

The transit peptide at 1-42 (MAAAAPGALGALRTGRVRLVAACCARLGPAAWARGTAPRRGY) directs the protein to the mitochondrion. K75 carries the N6-acetyllysine; alternate modification. K75 carries the post-translational modification N6-succinyllysine; alternate. Residues 80 to 94 (KNLLKMLSKAVDALK) form an RNA-binding region. Position 84 is an N6-succinyllysine (K84). N6-acetyllysine; alternate is present on residues K88 and K119. N6-succinyllysine; alternate occurs at positions 88 and 119. Residues K123 and K135 each carry the N6-succinyllysine modification. 2 positions are modified to N6-acetyllysine; alternate: K179 and K186. N6-succinyllysine; alternate is present on residues K179 and K186. An N6-succinyllysine modification is found at K304.

It belongs to the enoyl-CoA hydratase/isomerase family. In terms of assembly, homohexamer. Detected in heart, brain, liver, spleen, skeletal muscle and kidney. Expressed in brain, kidney, liver and spleen tissue (at protein level).

It localises to the mitochondrion. It carries out the reaction (3S)-3-hydroxy-3-methylglutaryl-CoA = 3-methyl-(2E)-glutaconyl-CoA + H2O. The enzyme catalyses (3S)-citramalyl-CoA = itaconyl-CoA + H2O. It catalyses the reaction 3-hydroxyisovaleryl-CoA = 3-methylbut-2-enoyl-CoA + H2O. The catalysed reaction is (S)-3-hydroxyglutaryl-CoA = (2E)-glutaconyl-CoA + H2O. Its pathway is amino-acid degradation; L-leucine degradation; (S)-3-hydroxy-3-methylglutaryl-CoA from 3-isovaleryl-CoA: step 3/3. Its function is as follows. Catalyzes the fifth step in the leucine degradation pathway, the reversible hydration of 3-methylglutaconyl-CoA (3-MG-CoA) to 3-hydroxy-3-methylglutaryl-CoA (HMG-CoA). Can catalyze the reverse reaction but at a much lower rate in vitro. HMG-CoA is then quickly degraded by another enzyme (such as HMG-CoA lyase) to give acetyl-CoA and acetoacetate. Uses other substrates such as (2E)-glutaconyl-CoA efficiently in vitro, and to a lesser extent 3-methylcrotonyl-CoA (3-methyl-(2E)-butenoyl-CoA), crotonyl-CoA ((2E)-butenoyl-CoA) and 3-hydroxybutanoyl-CoA (the missing carboxylate reduces affinity to the active site). Originally it was identified as an RNA-binding protein as it binds to AU-rich elements (AREs) in vitro. AREs direct rapid RNA degradation and mRNA deadenylation. Might have itaconyl-CoA hydratase activity, converting itaconyl-CoA into citramalyl-CoA in the C5-dicarboxylate catabolism pathway. The C5-dicarboxylate catabolism pathway is required to detoxify itaconate, an antimicrobial metabolite and immunomodulator produced by macrophages during certain infections, that can act as a vitamin B12-poisoning metabolite. In Mus musculus (Mouse), this protein is Methylglutaconyl-CoA hydratase, mitochondrial (Auh).